The primary structure comprises 317 residues: Melanocyte-stimulating hormone receptor (317 aa).

Residues 1 to 37 (MPVQGSQRRLLGSLNSTPTATPHLGLAANQTGARCLE) lie on the Extracellular side of the membrane. Asn-29 is a glycosylation site (N-linked (GlcNAc...) asparagine). The chain crosses the membrane as a helical span at residues 38-63 (VSIPDGLFLSLGLVSLVENVLVVTAI). Over 64 to 72 (AKNRNLHSP) the chain is Cytoplasmic. The chain crosses the membrane as a helical span at residues 73–93 (MYCFICCLALSDLLVSGSNML). Over 94-118 (ETAVILLLEAGALAARAAVVQQLDN) the chain is Extracellular. A helical transmembrane segment spans residues 119–140 (VIDVITCSSMLASLCFLGAIAV). Residues 141-163 (DRYISIFYALRYHSIVTLPRARR) are Cytoplasmic-facing. The chain crosses the membrane as a helical span at residues 164–183 (AVAAIWVASVLFSMLFIAYY). At 184 to 191 (DHAAVLLC) the chain is on the extracellular side. A helical transmembrane segment spans residues 192 to 211 (LVVFFLAMLVLMAVLYIHML). Residues 212–240 (ARARQHAQGIARLHKRQCPAHQGFGLKGA) are Cytoplasmic-facing. The helical transmembrane segment at 241 to 266 (ATLTILLGIFFLCWGPFFLHLTLIVL) threads the bilayer. Residues 267–279 (CPQHPTCSCIFKN) lie on the Extracellular side of the membrane. The chain crosses the membrane as a helical span at residues 280–300 (FNLFLALIICNAIIDPLIYAF). The Cytoplasmic segment spans residues 301–317 (RSQELRRTLKEVLLCSW). Cys-315 is lipidated: S-palmitoyl cysteine.

The protein belongs to the G-protein coupled receptor 1 family. Interacts with MGRN1, but does not undergo MGRN1-mediated ubiquitination; this interaction competes with GNAS-binding and thus inhibits agonist-induced cAMP production. Interacts with OPN3; the interaction results in a decrease in MC1R-mediated cAMP signaling and ultimately a decrease in melanin production in melanocytes.

The protein localises to the cell membrane. Receptor for MSH (alpha, beta and gamma) and ACTH. The activity of this receptor is mediated by G proteins which activate adenylate cyclase. Mediates melanogenesis, the production of eumelanin (black/brown) and phaeomelanin (red/yellow), via regulation of cAMP signaling in melanocytes. The chain is Melanocyte-stimulating hormone receptor (MC1R) from Cercopithecus mitis (Blue monkey).